We begin with the raw amino-acid sequence, 52 residues long: Keratin-associated protein 19-2 (52 aa).

It belongs to the KRTAP type 19 family. In terms of assembly, interacts with hair keratins.

In terms of biological role, in the hair cortex, hair keratin intermediate filaments are embedded in an interfilamentous matrix, consisting of hair keratin-associated proteins (KRTAP), which are essential for the formation of a rigid and resistant hair shaft through their extensive disulfide bond cross-linking with abundant cysteine residues of hair keratins. The matrix proteins include the high-sulfur and high-glycine-tyrosine keratins. The polypeptide is Keratin-associated protein 19-2 (KRTAP19-2) (Homo sapiens (Human)).